We begin with the raw amino-acid sequence, 610 residues long: UvrABC system protein C (610 aa).

Residues 16-94 enclose the GIY-YIG domain; that stretch reads SQPGVYRMYD…IKLYQPRYNV (79 aa). Residues 204–239 form the UVR domain; sequence DQVLTQLISRMETASQNLEFEEAARIRDQIQAVRRV.

It belongs to the UvrC family. As to quaternary structure, interacts with UvrB in an incision complex.

It localises to the cytoplasm. In terms of biological role, the UvrABC repair system catalyzes the recognition and processing of DNA lesions. UvrC both incises the 5' and 3' sides of the lesion. The N-terminal half is responsible for the 3' incision and the C-terminal half is responsible for the 5' incision. This is UvrABC system protein C from Escherichia coli (strain SMS-3-5 / SECEC).